Reading from the N-terminus, the 219-residue chain is Histone H1.11R (219 aa).

2 stretches are compositionally biased toward low complexity: residues 1 to 20 and 28 to 40; these read MAETAPAAAPAAAPAPAAKA and AAGGAKARKPAGP. Disordered stretches follow at residues 1-42 and 89-219; these read MAET…GPSV and LVSK…AKKK. The 74-residue stretch at 38–111 folds into the H15 domain; it reads AGPSVTELIT…GASGSFRLSK (74 aa). Basic residues-rich tracts occupy residues 121 to 135, 143 to 160, 168 to 183, and 192 to 219; these read PKKKASAAKPKKAAA, KKPKKAVAVKKSPKKAKK, KSVKSPKKAAKPKKAV, and KAVKPKAAKPKAAKPKAAKAKKAAAKKK.

This sequence belongs to the histone H1/H5 family.

It is found in the nucleus. It localises to the chromosome. Functionally, histones H1 are necessary for the condensation of nucleosome chains into higher-order structures. In Gallus gallus (Chicken), this protein is Histone H1.11R.